The primary structure comprises 367 residues: Inositol-3-phosphate synthase (367 aa).

Residues D78, A137, Y157, S200, D235, and K248 each coordinate NAD(+).

Belongs to the myo-inositol 1-phosphate synthase family. NAD(+) serves as cofactor.

The catalysed reaction is D-glucose 6-phosphate = 1D-myo-inositol 3-phosphate. Its function is as follows. Key enzyme in myo-inositol biosynthesis pathway that catalyzes the conversion of glucose 6-phosphate to 1D-myo-inositol 3-phosphate in a NAD-dependent manner. The protein is Inositol-3-phosphate synthase (ino1) of Mycobacterium tuberculosis (strain CDC 1551 / Oshkosh).